We begin with the raw amino-acid sequence, 25 residues long: Androctonin (25 aa).

Disulfide bonds link Cys-4-Cys-20 and Cys-10-Cys-16.

Its subcellular location is the secreted. Its function is as follows. Active against both bacteria (Gram-positive and Gram-negative) and filamentous fungi. Acts on the membrane of the bacterial cells. It destabilize a membrane by modifying its properties. The protein is Androctonin of Androctonus australis (Sahara scorpion).